A 119-amino-acid chain; its full sequence is MLRATKVCIYPTPEQAEHLNAQFGAVRFVYSKSLHIKKHAYQRHGVSLTPRKDIKPLLAVAKKFRKFRKFRKYAWLKEYDSIALQQAVINLDVAFSNCFNPKLKARFPMFKRKHGKLLG.

Expressed but non-essential protein, involved in the virulence of Salmonellas. The polypeptide is Virulence protein VsdF (vsdF) (Salmonella dublin).